We begin with the raw amino-acid sequence, 603 residues long: Pyruvate decarboxylase 4 (603 aa).

Substrate-binding residues include Asp-65 and His-152. The segment at 430 to 512 (DSWFNCQKLK…FLINNGGYTI (83 aa)) is thiamine pyrophosphate binding. Mg(2+)-binding residues include Asp-480, Asn-507, and Gly-509. Glu-513 contributes to the substrate binding site.

It belongs to the TPP enzyme family. Homotetramer. The cofactor is a metal cation. Requires thiamine diphosphate as cofactor. Expressed in shoots and at lowe levels in roots, flowers and siliques.

It catalyses the reaction a 2-oxocarboxylate + H(+) = an aldehyde + CO2. In Arabidopsis thaliana (Mouse-ear cress), this protein is Pyruvate decarboxylase 4 (PDC4).